The chain runs to 359 residues: Salicylate carboxymethyltransferase (359 aa).

Tyr18 serves as a coordination point for S-adenosyl-L-methionine. Substrate contacts are provided by residues Tyr18, 21 to 25, and Gln25; that span reads NSFIQ. Residues Gly59, 59 to 60, 59 to 61, Asn65, 96 to 99, Asp98, 129 to 131, and 146 to 148 contribute to the S-adenosyl-L-methionine site; these read GC, GCS, LNDL, SFY, and SYS. Substrate contacts are provided by residues 147 to 151 and Trp151; that span reads YSLMW. Mg(2+)-binding residues include Asn162, Asp248, Phe250, and Asn251. Tyr255 is a binding site for substrate.

It belongs to the methyltransferase superfamily. SABATH family.

It carries out the reaction salicylate + S-adenosyl-L-methionine = methyl salicylate + S-adenosyl-L-homocysteine. Functionally, catalyzes the methylation of the free carboxyl end of the plant hormone salicylic acid (SA). Converts SA to SA methyl ester (MSA). The volatile compound MSA is hypothesized to act as an airborne signal that triggers defense responses in uninfected plants. MSA is an important chemoattractant for moth pollinated flowering plants. In Clarkia breweri (Fairy fans), this protein is Salicylate carboxymethyltransferase (SAMT).